A 432-amino-acid chain; its full sequence is MPEYVNWLRHASPYINAHRDCTFVVMLPGDGVEHPNFGNIVHDLVLLHSLGVRLVLVHGSRPQIEARLAARGLTPHYHHGLRITDAATLECVIDAVGQLRIAIEARLSMDMASSPMQGSRLRVASGNLVTARPIGVLEGVDYHHTGEVRRVDRKGINRLLDERSIVLLSPLGYSPTGETFNLACEDVATRAAIDLGADKLLLFGADPGLLDENGKLVRELRPQQVPAHLQRLGGNYQAELLDAAAEACRGGVGRSHIVSYAEDGALLTELFTRDGGGTLVAQEQFERVREAAIEDVGGLLELISPLEEQGILVRRSREVLEREIEQFSVVEREGMIIACAALYQIADSDAGELACLAVNPEYRHGKRGDELLERIETRARAQGLKTLFVLTTRTAHWFRERGFVPSSVERLPSARASLYNYQRNSKIFEKAL.

The region spanning 286–425 (ERVREAAIED…ASLYNYQRNS (140 aa)) is the N-acetyltransferase domain.

Belongs to the acetyltransferase family. ArgA subfamily.

The protein localises to the cytoplasm. The enzyme catalyses L-glutamate + acetyl-CoA = N-acetyl-L-glutamate + CoA + H(+). The protein operates within amino-acid biosynthesis; L-arginine biosynthesis; N(2)-acetyl-L-ornithine from L-glutamate: step 1/4. In Pseudomonas fluorescens (strain ATCC BAA-477 / NRRL B-23932 / Pf-5), this protein is Amino-acid acetyltransferase.